Here is a 159-residue protein sequence, read N- to C-terminus: ATP synthase subunit b (159 aa).

Residues 2–22 (NISIPQIIAAILNFIILLLIV) traverse the membrane as a helical segment.

It belongs to the ATPase B chain family. As to quaternary structure, F-type ATPases have 2 components, F(1) - the catalytic core - and F(0) - the membrane proton channel. F(1) has five subunits: alpha(3), beta(3), gamma(1), delta(1), epsilon(1). F(0) has three main subunits: a(1), b(2) and c(10-14). The alpha and beta chains form an alternating ring which encloses part of the gamma chain. F(1) is attached to F(0) by a central stalk formed by the gamma and epsilon chains, while a peripheral stalk is formed by the delta and b chains.

The protein resides in the cell membrane. Its function is as follows. F(1)F(0) ATP synthase produces ATP from ADP in the presence of a proton or sodium gradient. F-type ATPases consist of two structural domains, F(1) containing the extramembraneous catalytic core and F(0) containing the membrane proton channel, linked together by a central stalk and a peripheral stalk. During catalysis, ATP synthesis in the catalytic domain of F(1) is coupled via a rotary mechanism of the central stalk subunits to proton translocation. Component of the F(0) channel, it forms part of the peripheral stalk, linking F(1) to F(0). In Clostridium botulinum (strain Okra / Type B1), this protein is ATP synthase subunit b.